Reading from the N-terminus, the 309-residue chain is Methionyl-tRNA formyltransferase (309 aa).

107-110 (SLLP) contributes to the (6S)-5,6,7,8-tetrahydrofolate binding site.

Belongs to the Fmt family.

It carries out the reaction L-methionyl-tRNA(fMet) + (6R)-10-formyltetrahydrofolate = N-formyl-L-methionyl-tRNA(fMet) + (6S)-5,6,7,8-tetrahydrofolate + H(+). Its function is as follows. Attaches a formyl group to the free amino group of methionyl-tRNA(fMet). The formyl group appears to play a dual role in the initiator identity of N-formylmethionyl-tRNA by promoting its recognition by IF2 and preventing the misappropriation of this tRNA by the elongation apparatus. In Borrelia turicatae (strain 91E135), this protein is Methionyl-tRNA formyltransferase.